Reading from the N-terminus, the 397-residue chain is Arginine biosynthesis bifunctional protein ArgJ (397 aa).

Substrate is bound by residues Thr147, Lys173, Thr184, Glu270, Asn392, and Thr397. Residue Thr184 is the Nucleophile of the active site.

The protein belongs to the ArgJ family. As to quaternary structure, heterotetramer of two alpha and two beta chains.

The protein resides in the cytoplasm. The enzyme catalyses N(2)-acetyl-L-ornithine + L-glutamate = N-acetyl-L-glutamate + L-ornithine. It catalyses the reaction L-glutamate + acetyl-CoA = N-acetyl-L-glutamate + CoA + H(+). It functions in the pathway amino-acid biosynthesis; L-arginine biosynthesis; L-ornithine and N-acetyl-L-glutamate from L-glutamate and N(2)-acetyl-L-ornithine (cyclic): step 1/1. Its pathway is amino-acid biosynthesis; L-arginine biosynthesis; N(2)-acetyl-L-ornithine from L-glutamate: step 1/4. In terms of biological role, catalyzes two activities which are involved in the cyclic version of arginine biosynthesis: the synthesis of N-acetylglutamate from glutamate and acetyl-CoA as the acetyl donor, and of ornithine by transacetylation between N(2)-acetylornithine and glutamate. The sequence is that of Arginine biosynthesis bifunctional protein ArgJ from Streptococcus mutans serotype c (strain ATCC 700610 / UA159).